The primary structure comprises 615 residues: Sodium-dependent noradrenaline transporter (615 aa).

Residues 1–28 (MLLARMNPQVQPENGGAGPGSEQPPRKR) are disordered. The Cytoplasmic portion of the chain corresponds to 1–60 (MLLARMNPQVQPENGGAGPGSEQPPRKRKEVLVVKERNGVQCLLASRDGDEQPRETWGKK). Residues 61 to 86 (IDFLLSVVGFAVDLANVWRFPYLCYK) form a helical membrane-spanning segment. Residues glycine 69, alanine 71, and valine 72 each coordinate Na(+). Aspartate 73 serves as a coordination point for (R)-noradrenaline. Aspartate 73 contacts dopamine. Asparagine 76 lines the Na(+) pocket. Tyrosine 85 and lysine 86 together coordinate (R)-noradrenaline. Residues 87–90 (NGGG) lie on the Extracellular side of the membrane. A helical transmembrane segment spans residues 91–114 (AFLIPYTLFLIIAGMPLFYMELAL). Residues 115–133 (GQYNREGAATVWKICPFFK) lie on the Cytoplasmic side of the membrane. Residues 134–164 (GVGYAVILIALYVGFYYNVIIAWSLYYLFSS) traverse the membrane as a helical segment. Positions 143 and 147 each coordinate (R)-noradrenaline. Alanine 143 is a dopamine binding site. Residues 165–231 (FTPTLPWTDC…SSGIHDIGLP (67 aa)) are Extracellular-facing. A disulfide bridge connects residues cysteine 174 and cysteine 183. N-linked (GlcNAc...) asparagine glycans are attached at residues asparagine 182, asparagine 190, and asparagine 196. The chain crosses the membrane as a helical span at residues 232–252 (QWQLLLCLIIVVIVLFFSLWK). Topologically, residues 253–255 (GVK) are cytoplasmic. Residues 256 to 280 (TSGKVVWITATLPYLVLFVLLVHGI) traverse the membrane as a helical segment. Over 281-304 (TLPGASNGINAYLHIDFYRLKEAT) the chain is Extracellular. A helical transmembrane segment spans residues 305 to 330 (VWIDAATQIFFSLGAGFGVLIAFASY). Phenylalanine 315 lines the (R)-noradrenaline pocket. Position 315 (phenylalanine 315) interacts with dopamine. Serine 316 serves as a coordination point for Na(+). Residues 331–336 (NKFDNN) are Cytoplasmic-facing. Residues 337–360 (CYRDALLTSTINCVTSFISGFAIF) form a helical membrane-spanning segment. Position 348 (asparagine 348) interacts with Na(+). Residues 361-400 (SILGYMAHEHKVNIEDVATEGAGLVFILYPEAISTLSGST) are Extracellular-facing. Glutamate 380 is a binding site for (R)-noradrenaline. Glutamate 380 is a dopamine binding site. A helical transmembrane segment spans residues 401 to 426 (FWAIVFFIMLLALGIDSSMGGMEAVI). The Na(+) site is built by aspartate 416 and serine 417. Residues 427–441 (TGLADDFQVLKRHRK) are Cytoplasmic-facing. The chain crosses the membrane as a helical span at residues 442-462 (LFTFAVSFGTFLLALFCITKG). Residue glycine 463 is a topological domain, extracellular. The chain crosses the membrane as a helical span at residues 464 to 490 (IYVLTLLDTFAAGTSILFAVLMEAIGV). Topologically, residues 491–520 (SWFYGVDRFSNDIQQMMGFKPGLYWRLCWK) are cytoplasmic. The helical transmembrane segment at 521 to 543 (FVSPAFLLFVVIVSIINFKPLTY) threads the bilayer. At 544–546 (DDY) the chain is on the extracellular side. Residues 547 to 567 (IFPLWANWVGWGIAGSSMVLV) form a helical membrane-spanning segment. Topologically, residues 568–615 (PAYIVYKFFSTRGSIRERLAYGITPASEHHLVAQRDIRQFQLQHWLAI) are cytoplasmic.

This sequence belongs to the sodium:neurotransmitter symporter (SNF) (TC 2.A.22) family. SLC6A2 subfamily. As to quaternary structure, monomer. Can form homodimers in the cell membrane; homodimerization is mostly mediated by cholesterol and lipids, and regulates neurotransmitter transport activity. Interacts with PRKCABP. In terms of processing, palmitoylated. Palmitoylation regulates protein levels and neurotransmitter transport.

Its subcellular location is the cell membrane. The protein localises to the cell projection. It is found in the axon. It localises to the synapse. The protein resides in the synaptosome. It carries out the reaction (R)-noradrenaline(out) + chloride(out) + Na(+)(out) = (R)-noradrenaline(in) + chloride(in) + Na(+)(in). The catalysed reaction is dopamine(out) + chloride(out) + Na(+)(out) = dopamine(in) + chloride(in) + Na(+)(in). It catalyses the reaction dopamine(out) + chloride(out) + 2 Na(+)(out) = dopamine(in) + chloride(in) + 2 Na(+)(in). With respect to regulation, inhibited by nisoxetine, oxaprotiline and desipramin. Mediates sodium- and chloride-dependent transport of norepinephrine (also known as noradrenaline), the primary signaling neurotransmitter in the autonomic sympathetic nervous system. Is responsible for norepinephrine re-uptake and clearance from the synaptic cleft, thus playing a crucial role in norepinephrine inactivation and homeostasis. Can also mediate sodium- and chloride-dependent transport of dopamine. In Bos taurus (Bovine), this protein is Sodium-dependent noradrenaline transporter (SLC6A2).